The following is an 841-amino-acid chain: MAP7 domain-containing protein 1 (841 aa).

2 disordered regions span residues 1-151 (MESG…ERAK) and 184-208 (EQRL…EKNK). Residues 22-52 (PPEPRPSPEGDPSPPPPPMSALVPDTPPDTP) are compositionally biased toward pro residues. Residues Thr-47 and Thr-51 each carry the phosphothreonine modification. Phosphoserine is present on residues Ser-70, Ser-86, and Ser-93. The residue at position 97 (Thr-97) is a Phosphothreonine. Phosphoserine occurs at positions 113 and 116. Position 118 is a phosphothreonine (Thr-118). Ser-123 and Ser-125 each carry phosphoserine. Residues 128-222 (TKQEVKKAGE…AAIQRSVKKT (95 aa)) are a coiled coil. Over residues 130–151 (QEVKKAGERHKLAKERREERAK) the composition is skewed to basic and acidic residues. A phosphoserine mark is found at Ser-254, Ser-273, Ser-313, Ser-366, and Ser-399. Positions 316–813 (TLPRNGRDQG…PSGDKSLSRT (498 aa)) are disordered. Residues 365–377 (ASASPLTPCSVTR) show a composition bias toward polar residues. A compositionally biased stretch (basic and acidic residues) spans 405–435 (RRPEASPVQKKEKKDKERENEKEKSALARER). The stretch at 412–441 (VQKKEKKDKERENEKEKSALARERSLKKRQ) forms a coiled coil. 5 positions are modified to phosphoserine: Ser-442, Ser-446, Ser-452, Ser-454, and Ser-460. Residues 460–473 (SPKSKARPSSPSTS) are compositionally biased toward low complexity. Residue Lys-462 forms a Glycyl lysine isopeptide (Lys-Gly) (interchain with G-Cter in SUMO2) linkage. Ser-479 and Ser-496 each carry phosphoserine. The span at 479–497 (SPCPSPGPGHTLPPKPPSP) shows a compositional bias: pro residues. Residues 523 to 539 (PEDKSQSKRRASNEKES) are compositionally biased toward basic and acidic residues. Residues Ser-544, Ser-548, and Ser-552 each carry the phosphoserine modification. The span at 544 to 561 (SPAPSPAPSPTPAPPQKE) shows a compositional bias: pro residues. Thr-554 is subject to Phosphothreonine. Residues 562–576 (QPPAETPTDAAVLTS) show a composition bias toward low complexity. Pro residues predominate over residues 577–586 (PPAPAPPVTP). A coiled-coil region spans residues 593–721 (TTDREEATRL…LEEIMKRTRK (129 aa)). Residues 594–735 (TDREEATRLL…ETKQKQDSKE (142 aa)) show a composition bias toward basic and acidic residues. 2 positions are modified to phosphoserine: Ser-742 and Ser-753. A phosphothreonine mark is found at Thr-813 and Thr-816. Ser-834 is modified (phosphoserine).

The protein belongs to the MAP7 family.

Its subcellular location is the cytoplasm. It localises to the cytoskeleton. It is found in the spindle. The protein localises to the microtubule organizing center. The protein resides in the centrosome. Its subcellular location is the midbody. Microtubule-stabilizing protein involved in the control of cell motility and neurite outgrowth. Facilitate microtubule stabilization through the maintenance of acetylated stable microtubules. The sequence is that of MAP7 domain-containing protein 1 (MAP7D1) from Homo sapiens (Human).